A 410-amino-acid chain; its full sequence is Pyruvate dehydrogenase complex protein X component, mitochondrial (410 aa).

A mitochondrion-targeting transit peptide spans 1–30 (MLSAISKVSTLKSCTRYLTKCNYHASAKLL). The region spanning 32-108 (VKTFSMPAMS…DVGEPIAYIA (77 aa)) is the Lipoyl-binding domain. Lys-73 carries the post-translational modification N6-lipoyllysine. Residues 169–210 (TLLPSVSLLLAENNISKQKALKEIAPSGSNGRLLKGDVLAYL) form the Peripheral subunit-binding (PSBD) domain.

It belongs to the 2-oxoacid dehydrogenase family. In terms of assembly, eukaryotic pyruvate dehydrogenase (PDH) complexes are organized as a core consisting of the oligomeric dihydrolipoamide acetyl-transferase (E2), around which are arranged multiple copies of pyruvate dehydrogenase (E1), dihydrolipoamide dehydrogenase (E3) and protein X (E3BP) bound by non-covalent bonds.

The protein localises to the mitochondrion matrix. Functionally, required for anchoring dihydrolipoamide dehydrogenase (E3) to the dihydrolipoamide transacetylase (E2) core of the pyruvate dehydrogenase complexes of eukaryotes. This specific binding is essential for a functional PDH complex. The sequence is that of Pyruvate dehydrogenase complex protein X component, mitochondrial (PDX1) from Saccharomyces cerevisiae (strain ATCC 204508 / S288c) (Baker's yeast).